Consider the following 664-residue polypeptide: E3 ubiquitin-protein ligase RNF139 (664 aa).

Ala-2 bears the N-acetylalanine mark. A run of 12 helical transmembrane segments spans residues 51 to 71, 85 to 105, 125 to 145, 154 to 174, 178 to 198, 293 to 313, 323 to 343, 356 to 376, 390 to 410, 420 to 440, 469 to 489, and 495 to 512; these read IVLQ…VLIL, AFLL…HIDF, SLWM…VTLL, LIIL…PLHI, LVFT…AVKL, GMSA…LAFI, LGFV…LSGL, MCLL…PVLM, FPVL…SYVL, LFAA…SLTV, SIIV…TMMF, and IRAF…YLQA. The RING-type; atypical zinc finger occupies 547–586; sequence CAICYHEFTTSARITPCNHYFHALCLRKWLYIQDTCPMCH. Polar residues predominate over residues 599–610; it reads SNVSNNNGFTPP. The tract at residues 599–664 is disordered; that stretch reads SNVSNNNGFT…AAEEFNDDTD (66 aa). A compositionally biased stretch (basic and acidic residues) spans 616–628; it reads EAVREAAAESDRE. The span at 629–639 shows a compositional bias: acidic residues; that stretch reads LNEDDSTDCDD. Position 634 is a phosphoserine (Ser-634). Phosphothreonine is present on residues Thr-635 and Thr-663.

In terms of assembly, interacts with VHL. Interacts with MHC class I and HM13. Component of SCAP-SREBP complex composed of SREBF2, SCAP and RNF139; the complex hampers the interaction between SCAP and SEC24B, thereby reducing SREBF2 proteolytic processing. Interacts with SREBF2 (via C-terminal domain). Interacts with SCAP; the interaction inhibits the interaction of SCAP with SEC24B and hampering the ER to Golgi transport of the SCAP-SREBP complex. Interacts with SEC24B. Interacts with INSIG1 and INSIG2. Interacts with EIF3F and EIF3H; the interaction leads to protein translation inhibitions in a ubiquitination-dependent manner. Interacts with XBP1; the interaction induces ubiquitination and degradation of XBP1. Interacts with AUP1, AMFR and UBE2G2; interaction with AUP1 facilitates interaction of RNF139 with ubiquitin-conjugating enzyme UBE2G2 and ubiquitin ligase AMFR/gp78, leading to sterol-induced ubiquitination of HMGCR and its subsequent proteasomal degradation. Autoubiquitinated. Ubiquitination is induced by sterol and leads to ist degradation via the ubiquitin-proteasome pathway.

It localises to the endoplasmic reticulum membrane. It catalyses the reaction S-ubiquitinyl-[E2 ubiquitin-conjugating enzyme]-L-cysteine + [acceptor protein]-L-lysine = [E2 ubiquitin-conjugating enzyme]-L-cysteine + N(6)-ubiquitinyl-[acceptor protein]-L-lysine.. The protein operates within protein modification; protein ubiquitination. E3-ubiquitin ligase; acts as a negative regulator of cell proliferation through mechanisms involving G2/M arrest and cell death. Required for MHC class I ubiquitination in cells expressing the cytomegalovirus protein US2 before dislocation from the endoplasmic reticulum (ER). Affects SREBP processing by hindering the SREBP-SCAP complex translocation from the ER to the Golgi, thereby reducing SREBF2 target gene expression. Involved in the sterol-accelerated degradation of HMGCR. This is achieved through binding to INSIG1 and/or INSIG2 at the ER membrane. In addition, interaction of RNF139 with AUP1 facilitates interaction of RNF139 with ubiquitin-conjugating enzyme UBE2G2 and ubiquitin ligase AMFR, leading to ubiquitination of HMGCR. The ubiquitinated HMGCR is then released from the ER by the complex into the cytosol for subsequent destruction. Required for INSIG1 ubiquitination. May be required for EIF3 complex ubiquitination. The chain is E3 ubiquitin-protein ligase RNF139 (RNF139) from Pongo abelii (Sumatran orangutan).